The following is a 2385-amino-acid chain: Neuron navigator 3 (2385 aa).

The segment at 17-38 (SKPVHTALPIPNLGTTGSQHCS) is disordered. Positions 29–38 (LGTTGSQHCS) are enriched in polar residues. In terms of domain architecture, Calponin-homology (CH) spans 77–184 (KEDSKIYTDW…LFFSLSRYKQ (108 aa)). The disordered stretch occupies residues 203–625 (VTHASPPSEA…LPQQQQHSHP (423 aa)). 3 stretches are compositionally biased toward polar residues: residues 210–243 (SEAS…TSQK), 258–279 (GSSS…FNSI), and 297–316 (KGPQ…STAG). A compositionally biased stretch (low complexity) spans 318 to 329 (PPASAIPSPSAS). A compositionally biased stretch (polar residues) spans 335–352 (KSMNVKHSATSTMLTVKQ). 2 stretches are compositionally biased toward low complexity: residues 353 to 363 (SSTATSPTPSS) and 427 to 439 (NSGL…TNSS). The segment covering 465–491 (PKEKEEKNRDKNKVCTEKPVKEEKDQV) has biased composition (basic and acidic residues). Positions 521 to 535 (IPSSSGIPKPGSKVP) are enriched in low complexity. Composition is skewed to polar residues over residues 537-548 (VKQTISPGSTAS), 557-567 (TKGSPSQSLSK), and 591-625 (ASPS…HSHP). Residues 679–707 (ETRRMRTVKNIADLRQNLEETMSSLRGTQ) are a coiled coil. 6 disordered regions span residues 877-1312 (ADSW…SPLF), 1351-1370 (SSSS…TSLH), 1410-1468 (LSES…SAMS), 1650-1778 (GALN…KRQN), 1850-1881 (DRLK…SRQS), and 2360-2385 (SSTQ…ESTL). A compositionally biased stretch (low complexity) spans 882 to 895 (DSSSVSSGLSDTLD). Residues 896–925 (NISTDDLNTTSSVSSYSNITVPSRKNTQLR) show a composition bias toward polar residues. Over residues 942–959 (EELKKPEEDFDSHGDAGG) the composition is skewed to basic and acidic residues. The segment covering 979–988 (ASLSVSQTGS) has biased composition (polar residues). Residues 1014 to 1026 (GKTDDAKASEKGK) are compositionally biased toward basic and acidic residues. Low complexity-rich tracts occupy residues 1074–1092 (GSSA…GSAT) and 1157–1170 (SSTS…SSKS). The segment covering 1187–1196 (GRSSPVTVNQ) has biased composition (polar residues). 2 stretches are compositionally biased toward low complexity: residues 1206–1226 (VSDS…TSAS) and 1253–1263 (GAKAGGKSASA). Over residues 1264–1289 (PNTEGVKSSSVMPSPSTTLARQGSLE) the composition is skewed to polar residues. The segment covering 1296–1305 (GSMGSAGGLS) has biased composition (gly residues). The span at 1436–1445 (NQEEGKEWLR) shows a compositional bias: basic and acidic residues. Residues 1446 to 1462 (SHSTGGLQDTGNQSPLV) are compositionally biased toward polar residues. Phosphoserine is present on residues Ser-1459 and Ser-1463. The stretch at 1562–1653 (AEEKAHSEQI…AQAAIQGALN (92 aa)) forms a coiled coil. Residues 1672–1689 (SVSSINSATSHSSIGSGN) show a composition bias toward low complexity. A compositionally biased stretch (polar residues) spans 1701–1714 (WVNSRGSELRSSFK). Residues 1794–1861 (EAEAEIILQL…LKAETGNTAK (68 aa)) are a coiled coil. Residues 1867–1881 (SESSSSTSSSSSRQS) show a composition bias toward low complexity.

This sequence belongs to the Nav/unc-53 family. Highly expressed in brain. Expressed at low levels in heart and placenta. Present in activated T-cells but not in resting T-cells (at protein level). Down-regulated in primary neuroblastoma.

The protein resides in the nucleus outer membrane. Functionally, plays a role in cell migration. May be involved in neuron regeneration. May regulate IL2 production by T-cells. The polypeptide is Neuron navigator 3 (NAV3) (Homo sapiens (Human)).